The primary structure comprises 255 residues: Receptor expression-enhancing protein 3 (255 aa).

The next 3 membrane-spanning stretches (helical) occupy residues 1–21, 35–55, and 59–79; these read MVSWMISRAVVLVFGMLYPAY, YVRWMMYWIVFALYTVIETVA, and VAWFPLYYELKIAFVIWLLSP. Residues 158 to 242 are disordered; that stretch reads TIQGDEPVGQ…KGRKEVRYGS (85 aa). At threonine 201 the chain carries Phosphothreonine. Serine 210 bears the Phosphoserine mark. Residues 222 to 231 are compositionally biased toward polar residues; the sequence is RSQSMKSVKT.

The protein belongs to the DP1 family. In terms of tissue distribution, expressed in circumvallate papillae.

It is found in the endoplasmic reticulum membrane. Its function is as follows. Microtubule-binding protein required to ensure proper cell division and nuclear envelope reassembly by sequestering the endoplasmic reticulum away from chromosomes during mitosis. Probably acts by clearing the endoplasmic reticulum membrane from metaphase chromosomes. In Homo sapiens (Human), this protein is Receptor expression-enhancing protein 3 (REEP3).